A 310-amino-acid chain; its full sequence is 2-dehydropantoate 2-reductase (310 aa).

NADP(+) is bound by residues 9 to 14 (GVGAIG) and N100. N100 provides a ligand contact to substrate. K184 (proton donor) is an active-site residue. Residues N188, N192, and S259 each coordinate substrate. E270 lines the NADP(+) pocket.

Belongs to the ketopantoate reductase family.

The protein localises to the cytoplasm. The catalysed reaction is (R)-pantoate + NADP(+) = 2-dehydropantoate + NADPH + H(+). Its pathway is cofactor biosynthesis; (R)-pantothenate biosynthesis; (R)-pantoate from 3-methyl-2-oxobutanoate: step 2/2. Catalyzes the NADPH-dependent reduction of ketopantoate into pantoic acid. The chain is 2-dehydropantoate 2-reductase from Aquifex aeolicus (strain VF5).